A 992-amino-acid polypeptide reads, in one-letter code: UPF0182 protein RHA1_ro06389 (992 aa).

A run of 7 helical transmembrane segments spans residues 18-38 (VLLV…RLIS), 63-83 (LLLF…ALLL), 114-134 (LFGL…AQSS), 174-194 (WLFV…YIFG), 211-231 (VQLA…YWFD), 260-280 (KLIL…AIFL), and 288-308 (MATA…PLVV). Residues 904–948 (TGSVATAPSAEEGTPPETGTTPPVDQGAAPAPTAPATPPSGTDVS) form a disordered region. Low complexity predominate over residues 908-934 (ATAPSAEEGTPPETGTTPPVDQGAAPA).

Belongs to the UPF0182 family.

The protein localises to the cell membrane. The chain is UPF0182 protein RHA1_ro06389 from Rhodococcus jostii (strain RHA1).